Here is a 215-residue protein sequence, read N- to C-terminus: Uracil-DNA glycosylase (215 aa).

Asp-59 (proton acceptor) is an active-site residue.

The protein belongs to the uracil-DNA glycosylase (UDG) superfamily. UNG family.

It is found in the cytoplasm. The catalysed reaction is Hydrolyzes single-stranded DNA or mismatched double-stranded DNA and polynucleotides, releasing free uracil.. In terms of biological role, excises uracil residues from the DNA which can arise as a result of misincorporation of dUMP residues by DNA polymerase or due to deamination of cytosine. The protein is Uracil-DNA glycosylase of Aliarcobacter butzleri (strain RM4018) (Arcobacter butzleri).